Here is a 124-residue protein sequence, read N- to C-terminus: Large ribosomal subunit protein uL18 (124 aa).

Belongs to the universal ribosomal protein uL18 family. In terms of assembly, part of the 50S ribosomal subunit; part of the 5S rRNA/L5/L18/L25 subcomplex. Contacts the 5S and 23S rRNAs.

Functionally, this is one of the proteins that bind and probably mediate the attachment of the 5S RNA into the large ribosomal subunit, where it forms part of the central protuberance. This chain is Large ribosomal subunit protein uL18, found in Desulfosudis oleivorans (strain DSM 6200 / JCM 39069 / Hxd3) (Desulfococcus oleovorans).